Here is a 100-residue protein sequence, read N- to C-terminus: Urease subunit gamma (100 aa).

This sequence belongs to the urease gamma subunit family. Heterotrimer of UreA (gamma), UreB (beta) and UreC (alpha) subunits. Three heterotrimers associate to form the active enzyme.

The protein resides in the cytoplasm. It catalyses the reaction urea + 2 H2O + H(+) = hydrogencarbonate + 2 NH4(+). Its pathway is nitrogen metabolism; urea degradation; CO(2) and NH(3) from urea (urease route): step 1/1. This Staphylococcus aureus (strain N315) protein is Urease subunit gamma.